Here is a 369-residue protein sequence, read N- to C-terminus: Sulfate permease 2, chloroplastic (369 aa).

The interval 1–21 (MASTTLLQPALGLPSRVGPRS) is disordered. Residues 1 to 82 (MASTTLLQPA…QQSRGDLLVS (82 aa)) constitute a chloroplast transit peptide. 5 consecutive transmembrane segments (helical) span residues 110 to 130 (VGVAAAYIGLVVLVPFLNVFV), 156 to 176 (TLMLAFVTVPLNTVFGTVAAI), 187 to 207 (VFLMSLLDLPFSISPVVTGLM), 229 to 249 (VVFAFTGMALATMFVTLPFVV), and 335 to 355 (TEAAFAAAVLLSALALGTLWI). The ABC transmembrane type-1 domain maps to 153–356 (LKMTLMLAFV…ALALGTLWIK (204 aa)).

Belongs to the ATP-binding cassette (ABC) (TC 3.A.1) superfamily. Part of the chloroplast sulfate permease holocomplex. May form a heterodimer with SLUP1.

Its subcellular location is the plastid. The protein localises to the chloroplast membrane. Its function is as follows. Part of the ABC-type chloroplast envelope-localized sulfate transporter. This Chlamydomonas reinhardtii (Chlamydomonas smithii) protein is Sulfate permease 2, chloroplastic (SULP2).